The sequence spans 1026 residues: Multidrug resistance protein MdtC (1026 aa).

10 helical membrane passes run 12 to 34 (VATL…LLPV), 336 to 353 (QSLI…FLFL), 360 to 382 (AIPA…LCGF), 431 to 450 (VGFT…LPLL), 463 to 485 (FAVT…TPML), 525 to 547 (HARW…YISI), 853 to 875 (LLLI…ESYV), 895 to 917 (LEWF…IGIV), 948 to 970 (LLRF…PLVL), and 985 to 1007 (TIVG…VYLF).

The protein belongs to the resistance-nodulation-cell division (RND) (TC 2.A.6) family. MdtC subfamily. In terms of assembly, part of a tripartite efflux system composed of MdtA, MdtB and MdtC. MdtC forms a heteromultimer with MdtB.

Its subcellular location is the cell inner membrane. This is Multidrug resistance protein MdtC from Pectobacterium atrosepticum (strain SCRI 1043 / ATCC BAA-672) (Erwinia carotovora subsp. atroseptica).